A 183-amino-acid chain; its full sequence is Adenine phosphoribosyltransferase (183 aa).

Belongs to the purine/pyrimidine phosphoribosyltransferase family. As to quaternary structure, homodimer.

The protein resides in the cytoplasm. It carries out the reaction AMP + diphosphate = 5-phospho-alpha-D-ribose 1-diphosphate + adenine. The protein operates within purine metabolism; AMP biosynthesis via salvage pathway; AMP from adenine: step 1/1. In terms of biological role, catalyzes a salvage reaction resulting in the formation of AMP, that is energically less costly than de novo synthesis. The chain is Adenine phosphoribosyltransferase from Escherichia coli O157:H7.